A 99-amino-acid polypeptide reads, in one-letter code: UPF0751 protein BCE_A0020 (99 aa).

The protein belongs to the UPF0751 family.

This Bacillus cereus (strain ATCC 10987 / NRS 248) protein is UPF0751 protein BCE_A0020.